The primary structure comprises 107 residues: uncharacterized protein (107 aa).

In terms of domain architecture, HTH cro/C1-type spans 13–68 (LQEEFLEPLSLKISDLAQILDVHRNTASNIVNNSSRITLEMAVKLAKVFDTTPEFW). The H-T-H motif DNA-binding region spans 24–43 (KISDLAQILDVHRNTASNIV).

It belongs to the VapA/VapI family.

This is an uncharacterized protein from Haemophilus influenzae (strain ATCC 51907 / DSM 11121 / KW20 / Rd).